A 298-amino-acid polypeptide reads, in one-letter code: Zinc import ATP-binding protein ZnuC (298 aa).

The ABC transporter domain maps to 17 to 232; the sequence is IELRNAGVYR…PEYVRLFGSR (216 aa). ATP is bound at residue 49-56; that stretch reads GQNGAGKS. The tract at residues 273 to 298 is disordered; sequence RGHCHVEDGHHHDHEHHHHEGGQPRA. Positions 276 to 298 are enriched in basic and acidic residues; it reads CHVEDGHHHDHEHHHHEGGQPRA.

The protein belongs to the ABC transporter superfamily. Zinc importer (TC 3.A.1.15.5) family. The complex is composed of two ATP-binding proteins (ZnuC), two transmembrane proteins (ZnuB) and a solute-binding protein (ZnuA).

The protein resides in the cell inner membrane. It catalyses the reaction Zn(2+)(out) + ATP(in) + H2O(in) = Zn(2+)(in) + ADP(in) + phosphate(in) + H(+)(in). Functionally, part of the ABC transporter complex ZnuABC involved in zinc import. Responsible for energy coupling to the transport system. The chain is Zinc import ATP-binding protein ZnuC from Brucella melitensis biotype 1 (strain ATCC 23456 / CCUG 17765 / NCTC 10094 / 16M).